Here is a 67-residue protein sequence, read N- to C-terminus: UPF0435 protein SSP0913 (67 aa).

The protein belongs to the UPF0435 family.

This is UPF0435 protein SSP0913 from Staphylococcus saprophyticus subsp. saprophyticus (strain ATCC 15305 / DSM 20229 / NCIMB 8711 / NCTC 7292 / S-41).